A 524-amino-acid polypeptide reads, in one-letter code: MKKFDNLGLDNIKEIFHNLSYDELNAHEKVNNEGLSTDNDTFCVDTGIFTGRSPKDKYFVKQDPSSKYIAWGKVNQPITKELFDKLLTKAKQELSGKKIYVQDAFCGASLQSRKAVRFVTEIAWQAHFVKNMFIRPSQEELENFKADFIVYNACKCINEDYKQDGLNSEVFVIFNVEENIAVIGGTWYGGEMKKGIFSMMNYWLPLENKLSMHCSANVGEKGDVALFFGLSGTGKTTLSTDPKRKLIGDDEHGWDDEGVFNFEGGCYAKTINLDPEHEPEIYGAIKRNALLENVVLRADKSVDYADASKTENTRVSYPIEHIENHEPSLKAGHPKNIIFLSADAFGILPPVSKLSKEQAMYYFLSGYTAKVAGTERGITEPQATFSACFGEPFMPLHPTVYARLLGEKIEKYEVNVYLVNTGWSGGSYGVGKRMSIKATRACINAILDGSITKCEFENFEVFDLAIPKALEGVESTLLNPINTWSDKNAYTETRDKLAHMFVQNFKRYEDVKEGIEFSKFGPKI.

The substrate site is built by arginine 52, tyrosine 188, and lysine 194. ATP contacts are provided by residues lysine 194, histidine 213, and 229 to 237 (GLSGTGKTT). Lysine 194 and histidine 213 together coordinate Mn(2+). Aspartate 250 serves as a coordination point for Mn(2+). 3 residues coordinate ATP: glutamate 278, arginine 314, and threonine 439. Arginine 314 contributes to the substrate binding site.

Belongs to the phosphoenolpyruvate carboxykinase (ATP) family. The cofactor is Mn(2+).

It localises to the cytoplasm. The catalysed reaction is oxaloacetate + ATP = phosphoenolpyruvate + ADP + CO2. It participates in carbohydrate biosynthesis; gluconeogenesis. Functionally, involved in the gluconeogenesis. Catalyzes the conversion of oxaloacetate (OAA) to phosphoenolpyruvate (PEP) through direct phosphoryl transfer between the nucleoside triphosphate and OAA. The polypeptide is Phosphoenolpyruvate carboxykinase (ATP) (Campylobacter jejuni subsp. doylei (strain ATCC BAA-1458 / RM4099 / 269.97)).